The primary structure comprises 537 residues: Chaperonin GroEL (537 aa).

ATP-binding positions include 29–32, 86–90, G413, and D492; these read TLGP and DGTTT.

The protein belongs to the chaperonin (HSP60) family. Forms a cylinder of 14 subunits composed of two heptameric rings stacked back-to-back. Interacts with the co-chaperonin GroES.

It localises to the cytoplasm. It catalyses the reaction ATP + H2O + a folded polypeptide = ADP + phosphate + an unfolded polypeptide.. Together with its co-chaperonin GroES, plays an essential role in assisting protein folding. The GroEL-GroES system forms a nano-cage that allows encapsulation of the non-native substrate proteins and provides a physical environment optimized to promote and accelerate protein folding. In Dehalococcoides mccartyi (strain CBDB1), this protein is Chaperonin GroEL.